We begin with the raw amino-acid sequence, 681 residues long: Cobalamin-dependent radical SAM methyltransferase TokK (681 aa).

The 144-residue stretch at 1–144 folds into the B12-binding domain; that stretch reads MSAELASRGR…ATRLSDHPDY (144 aa). Cob(II)alamin-binding residues include N18, S72, Y74, V75, H103, G126, and E127. The region spanning 192–417 is the Radical SAM core domain; the sequence is RGLRFYALWE…RMYVERPGTP (226 aa). The [4Fe-4S] cluster site is built by C206 and C210. A 5'-deoxyadenosine-binding site is contributed by F212. Residue C213 coordinates [4Fe-4S] cluster. Residues D214 and C249 each coordinate cob(II)alamin. Residues Q312, E349, and G384 each contribute to the 5'-deoxyadenosine site.

Belongs to the methyltransferase superfamily. Requires [4Fe-4S] cluster as cofactor. Cob(II)alamin serves as cofactor.

It functions in the pathway antibiotic biosynthesis. Functionally, methyltransferase involved in the biosynthesis of the beta-lactam carbapenem antibiotic asparenomycin. Catalyzes three consecutive S-adenosyl-L-methionine-dependent methylations to build out the C6-isopropyl side chain in a stereocontrolled manner. The polypeptide is Cobalamin-dependent radical SAM methyltransferase TokK (Streptomyces tokunonensis).